Consider the following 207-residue polypeptide: Germin-like protein 1 (207 aa).

An N-terminal signal peptide occupies residues 1–17 (MLRIIFLLSLLFALSND). A disulfide bridge links Cys23 with Cys38. The region spanning 51-197 (FSLGTPGNTT…TTFLPPATVK (147 aa)) is the Cupin type-1 domain. N-linked (GlcNAc...) asparagine glycosylation occurs at Asn58. Mn(2+) contacts are provided by His99, His101, Glu106, and His145.

The protein belongs to the germin family. As to quaternary structure, oligomer (believed to be a pentamer but probably hexamer).

It localises to the secreted. The protein localises to the extracellular space. The protein resides in the apoplast. May play a role in plant defense. Probably has no oxalate oxidase activity even if the active site is conserved. This is Germin-like protein 1 (GER1) from Brassica napus (Rape).